We begin with the raw amino-acid sequence, 338 residues long: Tetraacyldisaccharide 4'-kinase (338 aa).

Residue 63-70 participates in ATP binding; sequence TVGGAGKT.

This sequence belongs to the LpxK family.

The catalysed reaction is a lipid A disaccharide + ATP = a lipid IVA + ADP + H(+). Its pathway is glycolipid biosynthesis; lipid IV(A) biosynthesis; lipid IV(A) from (3R)-3-hydroxytetradecanoyl-[acyl-carrier-protein] and UDP-N-acetyl-alpha-D-glucosamine: step 6/6. Its function is as follows. Transfers the gamma-phosphate of ATP to the 4'-position of a tetraacyldisaccharide 1-phosphate intermediate (termed DS-1-P) to form tetraacyldisaccharide 1,4'-bis-phosphate (lipid IVA). In Hahella chejuensis (strain KCTC 2396), this protein is Tetraacyldisaccharide 4'-kinase.